A 59-amino-acid polypeptide reads, in one-letter code: Large ribosomal subunit protein bL32 (59 aa).

Basic residues predominate over residues 1–16; sequence MAVPKRKTSPSKRGMR. The tract at residues 1 to 59 is disordered; sequence MAVPKRKTSPSKRGMRRSADALKAPTYIEDKNSGELRRPHHIDLKTGMYRGRSVLPPKD. Positions 28–44 are enriched in basic and acidic residues; that stretch reads IEDKNSGELRRPHHIDL.

Belongs to the bacterial ribosomal protein bL32 family.

The chain is Large ribosomal subunit protein bL32 from Bartonella quintana (strain Toulouse) (Rochalimaea quintana).